Here is a 153-residue protein sequence, read N- to C-terminus: Small ribosomal subunit protein uS7c (153 aa).

It belongs to the universal ribosomal protein uS7 family. As to quaternary structure, part of the 30S ribosomal subunit.

The protein localises to the plastid. Functionally, one of the primary rRNA binding proteins, it binds directly to 16S rRNA where it nucleates assembly of the head domain of the 30S subunit. The polypeptide is Small ribosomal subunit protein uS7c (rps7) (Helicosporidium sp. subsp. Simulium jonesii (Green alga)).